The following is a 629-amino-acid chain: tRNA uridine 5-carboxymethylaminomethyl modification enzyme MnmG (629 aa).

FAD-binding positions include 14 to 19 (GAGHAG), valine 126, and serine 181. 273–287 (GPRYCPSIEDKVVRF) is an NAD(+) binding site. Residue glutamine 370 participates in FAD binding.

It belongs to the MnmG family. In terms of assembly, homodimer. Heterotetramer of two MnmE and two MnmG subunits. FAD serves as cofactor.

It is found in the cytoplasm. Its function is as follows. NAD-binding protein involved in the addition of a carboxymethylaminomethyl (cmnm) group at the wobble position (U34) of certain tRNAs, forming tRNA-cmnm(5)s(2)U34. This chain is tRNA uridine 5-carboxymethylaminomethyl modification enzyme MnmG, found in Geobacillus thermodenitrificans (strain NG80-2).